The following is a 157-amino-acid chain: SsrA-binding protein (157 aa).

The segment at 134–157 is disordered; the sequence is HDKRESEKKRDWGREKGRLLRARG. A compositionally biased stretch (basic and acidic residues) spans 135–151; sequence DKRESEKKRDWGREKGR.

The protein belongs to the SmpB family.

The protein resides in the cytoplasm. In terms of biological role, required for rescue of stalled ribosomes mediated by trans-translation. Binds to transfer-messenger RNA (tmRNA), required for stable association of tmRNA with ribosomes. tmRNA and SmpB together mimic tRNA shape, replacing the anticodon stem-loop with SmpB. tmRNA is encoded by the ssrA gene; the 2 termini fold to resemble tRNA(Ala) and it encodes a 'tag peptide', a short internal open reading frame. During trans-translation Ala-aminoacylated tmRNA acts like a tRNA, entering the A-site of stalled ribosomes, displacing the stalled mRNA. The ribosome then switches to translate the ORF on the tmRNA; the nascent peptide is terminated with the 'tag peptide' encoded by the tmRNA and targeted for degradation. The ribosome is freed to recommence translation, which seems to be the essential function of trans-translation. The chain is SsrA-binding protein from Nitrobacter hamburgensis (strain DSM 10229 / NCIMB 13809 / X14).